The sequence spans 295 residues: Ribosomal RNA small subunit methyltransferase A (295 aa).

The S-adenosyl-L-methionine site is built by Asn40, Val42, Gly67, Glu88, Asp118, and Asn135.

The protein belongs to the class I-like SAM-binding methyltransferase superfamily. rRNA adenine N(6)-methyltransferase family. RsmA subfamily.

It is found in the cytoplasm. The catalysed reaction is adenosine(1518)/adenosine(1519) in 16S rRNA + 4 S-adenosyl-L-methionine = N(6)-dimethyladenosine(1518)/N(6)-dimethyladenosine(1519) in 16S rRNA + 4 S-adenosyl-L-homocysteine + 4 H(+). In terms of biological role, specifically dimethylates two adjacent adenosines (A1518 and A1519) in the loop of a conserved hairpin near the 3'-end of 16S rRNA in the 30S particle. May play a critical role in biogenesis of 30S subunits. The chain is Ribosomal RNA small subunit methyltransferase A from Arthrobacter sp. (strain FB24).